Consider the following 66-residue polypeptide: Large ribosomal subunit protein bL35 (66 aa).

Positions 1-16 are enriched in basic residues; that stretch reads MPKQKTHRASAKRFKR. A disordered region spans residues 1 to 20; that stretch reads MPKQKTHRASAKRFKRTGNG.

Belongs to the bacterial ribosomal protein bL35 family.

This Lactococcus lactis subsp. lactis (strain IL1403) (Streptococcus lactis) protein is Large ribosomal subunit protein bL35.